The sequence spans 2511 residues: Chromodomain-helicase-DNA-binding protein 8 (2511 aa).

The segment at 484–615 is disordered; sequence PRVLNQDELP…RSNRQVKRKK (132 aa). A compositionally biased stretch (gly residues) spans 515 to 524; sequence GGGVGGGGGG. Basic residues predominate over residues 604-615; that stretch reads KRRSNRQVKRKK. Chromo domains lie at 680–745 and 760–826; these read AIVD…AQMR and VEVD…RTPR. A Helicase ATP-binding domain is found at 859 to 1033; that stretch reads LFNWYNRQNC…FSLLHFLEPA (175 aa). Residue 872-879 coordinates ATP; that stretch reads DEMGLGKT. The short motif at 984–987 is the DEAH box element; it reads DEAH. The region spanning 1174-1330 is the Helicase C-terminal domain; it reads LLDKLLPRLK…SMSGNKESSI (157 aa). 4 disordered regions span residues 1440 to 1482, 1715 to 1736, 2086 to 2168, and 2468 to 2511; these read TRQF…HSGG, EQQAADPELGEGGDYDKYSEDP, SKNN…LTDP, and PSAL…SSED. Positions 1452-1461 are enriched in acidic residues; it reads DLSDLDSDDD. Positions 2111-2125 are enriched in low complexity; sequence DSGSSSSSRHSGSSD.

The protein belongs to the SNF2/RAD54 helicase family. CHD8 subfamily. In terms of assembly, component of some MLL1/MLL complex.

It is found in the nucleus. It carries out the reaction ATP + H2O = ADP + phosphate + H(+). ATP-dependent chromatin-remodeling factor, it slides nucleosomes along DNA; nucleosome sliding requires ATP. Acts as a transcription repressor by remodeling chromatin structure and recruiting histone H1 to target genes. Suppresses p53/tp53-mediated apoptosis by recruiting histone H1 and preventing p53/tp53 transactivation activity. Acts as a negative regulator of Wnt signaling pathway by regulating beta-catenin (ctnnb1) activity. Negatively regulates ctnnb1-targeted gene expression by being recruited specifically to the promoter regions of several ctnnb1 responsive genes. May also act as a transcription activator by participating in efficient U6 RNA polymerase III transcription. This is Chromodomain-helicase-DNA-binding protein 8 from Danio rerio (Zebrafish).